The following is a 65-amino-acid chain: Light-harvesting protein B800/830/1020 alpha-2 chain (65 aa).

The Cytoplasmic segment spans residues 1 to 13 (MWKLWKFVDFRMT). Residues 14–34 (AVGFHIFFALIAFAVHFACIS) form a helical membrane-spanning segment. Residue His-29 participates in a bacteriochlorophyll binding. The Periplasmic segment spans residues 35–65 (SERFNWLEGAPAAEYYMDENPGIWKRTSYDG).

The protein belongs to the antenna complex alpha subunit family. In terms of assembly, the core complex is formed by different alpha and beta chains, binding bacteriochlorophyll molecules, and arranged most probably in tetrameric structures disposed around the reaction center. The non-pigmented gamma chains may constitute additional components.

The protein resides in the cell inner membrane. Its function is as follows. Antenna complexes are light-harvesting systems, which transfer the excitation energy to the reaction centers. The polypeptide is Light-harvesting protein B800/830/1020 alpha-2 chain (Halorhodospira halochloris (Ectothiorhodospira halochloris)).